The primary structure comprises 458 residues: UDP-N-acetylmuramoylalanine--D-glutamate ligase (458 aa).

Residue 124–130 (GSDGKTT) participates in ATP binding.

It belongs to the MurCDEF family.

It localises to the cytoplasm. It carries out the reaction UDP-N-acetyl-alpha-D-muramoyl-L-alanine + D-glutamate + ATP = UDP-N-acetyl-alpha-D-muramoyl-L-alanyl-D-glutamate + ADP + phosphate + H(+). Its pathway is cell wall biogenesis; peptidoglycan biosynthesis. Its function is as follows. Cell wall formation. Catalyzes the addition of glutamate to the nucleotide precursor UDP-N-acetylmuramoyl-L-alanine (UMA). This chain is UDP-N-acetylmuramoylalanine--D-glutamate ligase, found in Clostridium novyi (strain NT).